The following is a 175-amino-acid chain: NADH-ubiquinone oxidoreductase chain 6 (175 aa).

The next 6 membrane-spanning stretches (helical) occupy residues 1 to 21, 24 to 44, 51 to 71, 87 to 107, 112 to 132, and 148 to 168; these read MMYIVFIMSVLYVVGFIGFSS, SPVYGGMSLVVSGGLGCGIIM, LGLVVFLVYLGGMMVVFGYTI, VVLSAFLVGLLMEVFMVVWLF, ELVGFYFGGLESFVTLGEGGF, and CGFWFLAMAGWMLFVSIFIAT.

Belongs to the complex I subunit 6 family. As to quaternary structure, core subunit of respiratory chain NADH dehydrogenase (Complex I) which is composed of 45 different subunits.

The protein localises to the mitochondrion inner membrane. The catalysed reaction is a ubiquinone + NADH + 5 H(+)(in) = a ubiquinol + NAD(+) + 4 H(+)(out). Functionally, core subunit of the mitochondrial membrane respiratory chain NADH dehydrogenase (Complex I) which catalyzes electron transfer from NADH through the respiratory chain, using ubiquinone as an electron acceptor. Essential for the catalytic activity and assembly of complex I. The polypeptide is NADH-ubiquinone oxidoreductase chain 6 (MT-ND6) (Elephas maximus (Indian elephant)).